Here is a 464-residue protein sequence, read N- to C-terminus: Lysosomal proton-coupled steroid conjugate and bile acid symporter SLC46A3 (464 aa).

The N-terminal stretch at 1-26 (MRKVLLVEPVIFIYIFASSLTSPVVQ) is a signal peptide. Residues 27-71 (QFIYRKLWEEEYNSTAISSDNSSHCERNKSSPTYVMEKAIQEKTS) are Extracellular-facing. Asn39, Asn47, and Asn54 each carry an N-linked (GlcNAc...) asparagine glycan. The helical transmembrane segment at 72–92 (FFNMQLDLTGAVPSLIVAFII) threads the bilayer. Over 93-104 (VANGDHQGRKKS) the chain is Cytoplasmic. Residues 105 to 125 (LVLPSIGALIADIFLTIVSYF) traverse the membrane as a helical segment. Over 126–130 (SWPTS) the chain is Extracellular. The helical transmembrane segment at 131-151 (VLFLATFISGLFGSMATFLGG) threads the bilayer. At 152 to 171 (GFAYIADQCHDEKQKTTRIA) the chain is on the cytoplasmic side. A helical transmembrane segment spans residues 172–192 (VIDLIFGVVSGLAGLSSGYFL). Over 193-198 (REMGFT) the chain is Extracellular. Residues 199 to 219 (WTFATASLLHVVNIIYITFFL) form a helical membrane-spanning segment. Residues 220-259 (QDTVHISEFQQQAPLSYKEHLKETFSGVYMLFKTAPSKKR) lie on the Cytoplasmic side of the membrane. A helical transmembrane segment spans residues 260 to 280 (ILIIVLLFIFMTYLFTMFGGS). The Extracellular segment spans residues 281–296 (SLFTLYELDEPLCWTE). Residues 297–317 (VYIGYGAAAFTSISLTSFLGV) form a helical membrane-spanning segment. Residues 318-326 (YLFSKCLKD) lie on the Cytoplasmic side of the membrane. The chain crosses the membrane as a helical span at residues 327 to 347 (IYIVFIGIFSYIGGIVMAAFA). At 348–349 (KT) the chain is on the extracellular side. The helical transmembrane segment at 350–370 (TLLMFLVRVPSLFSIMPIPVL) threads the bilayer. Over 371–384 (RSMLSKVVLPSEQG) the chain is Cytoplasmic. A helical membrane pass occupies residues 385–405 (AVFACIACLEVLTGTISLSVF). The Extracellular segment spans residues 406 to 418 (NVIYAATVAWFSG). A helical membrane pass occupies residues 419–439 (FSFLLSASLCLIPLGVLCWLL). Residues 440-464 (CTSWNGEDLALLVPEEVSSIDSVDS) are Cytoplasmic-facing.

It belongs to the major facilitator superfamily. SLC46A family.

The protein resides in the lysosome membrane. The enzyme catalyses estrone 3-sulfate(out) + n H(+)(out) = estrone 3-sulfate(in) + n H(+)(in). It carries out the reaction 25-hydroxyvitamin D3 sulfate(out) + n H(+)(out) = 25-hydroxyvitamin D3 sulfate(in) + n H(+)(in). It catalyses the reaction cholate(out) + n H(+)(out) = cholate(in) + n H(+)(in). The catalysed reaction is glycocholate(out) + n H(+)(out) = glycocholate(in) + n H(+)(in). The enzyme catalyses taurocholate(out) + n H(+)(out) = taurocholate(in) + n H(+)(in). It carries out the reaction dehydroepiandrosterone 3-sulfate(out) + n H(+)(out) = dehydroepiandrosterone 3-sulfate(in) + n H(+)(in). Functionally, lysosomal proton-coupled steroid conjugate and bile acid transporter. Preferentially recognizes lipophilic steroid conjugates or bile acis as endogenous substrates and seems to mediate escape from lysosomes to the cytoplasm. Modulates hepatic cytosolic copper homeostasis, maybe acting as a lysosomal copper transporter and sequestering copper ions in the lysosome. This Gallus gallus (Chicken) protein is Lysosomal proton-coupled steroid conjugate and bile acid symporter SLC46A3 (SLC46A3).